Here is an 85-residue protein sequence, read N- to C-terminus: uncharacterized protein (85 aa).

Residues 44–85 are disordered; it reads EAHPSEHNGTVPRSLSQEWAKILAEEAEENSEENNDESEEDN. The span at 50–60 shows a compositional bias: polar residues; sequence HNGTVPRSLSQ. Positions 68–85 are enriched in acidic residues; it reads EEAEENSEENNDESEEDN.

This is an uncharacterized protein from Haloarcula hispanica (His1V).